Here is a 114-residue protein sequence, read N- to C-terminus: Small ribosomal subunit protein bS6 (114 aa).

It belongs to the bacterial ribosomal protein bS6 family.

Its function is as follows. Binds together with bS18 to 16S ribosomal RNA. The sequence is that of Small ribosomal subunit protein bS6 from Phocaeicola vulgatus (strain ATCC 8482 / DSM 1447 / JCM 5826 / CCUG 4940 / NBRC 14291 / NCTC 11154) (Bacteroides vulgatus).